Consider the following 153-residue polypeptide: Ribonuclease H (153 aa).

An RNase H type-1 domain is found at 1–142 (MTPEVVIYTD…ADALARKGLS (142 aa)). Residues Asp-10, Glu-48, Asp-70, and Asp-134 each coordinate Mg(2+).

This sequence belongs to the RNase H family. As to quaternary structure, monomer. Mg(2+) serves as cofactor.

It localises to the cytoplasm. The catalysed reaction is Endonucleolytic cleavage to 5'-phosphomonoester.. In terms of biological role, endonuclease that specifically degrades the RNA of RNA-DNA hybrids. This is Ribonuclease H from Phenylobacterium zucineum (strain HLK1).